Reading from the N-terminus, the 490-residue chain is Myocilin (490 aa).

The first 18 residues, 1 to 18, serve as a signal peptide directing secretion; sequence MPAVQLLLLACLLGGVGA. Residues 51-170 adopt a coiled-coil conformation; it reads GQAMLAIQEL…QEVASLRRGQ (120 aa). The segment at 152–186 is disordered; it reads LARRLESSSQEVASLRRGQCPQAHSSSQDVPSGSR. A compositionally biased stretch (polar residues) spans 173–182; it reads QAHSSSQDVP. Residues 230 to 489 enclose the Olfactomedin-like domain; that stretch reads GCGELVWVGE…MVSYDIKLSR (260 aa). The cysteines at positions 231 and 419 are disulfide-linked. The Ca(2+) site is built by D366, N414, A415, I463, and D464. Positions 488 to 490 match the Microbody targeting signal motif; that stretch reads SRL.

Homodimer (via N-terminus). Can also form higher oligomers. Interacts with OLFM3, FN1, NRCAM, GLDN and NFASC. Interacts (via N-terminus) with MYL2. Interacts with SFRP1, FRZB, FZD7, FZD10, FZD1 and WIF1; regulates Wnt signaling. Interacts with SNTA1; regulates muscle hypertrophy. Interacts with ERBB2 and ERBB3; activates ERBB2-ERBB3 signaling pathway. Interacts with SNCG; affects its secretion and its aggregation. Palmitoylated. Post-translationally, undergoes a calcium-dependent proteolytic cleavage at Gln-212 by CAPN2 in the endoplasmic reticulum. The result is the production of two fragments, one of 35 kDa containing the C-terminal olfactomedin-like domain, and another of 20 kDa containing the N-terminal leucine zipper-like domain. In terms of processing, glycosylated. The myocilin 35 kDa fragment is detected in iris and ciliary body.

Its subcellular location is the secreted. It localises to the golgi apparatus. The protein localises to the cytoplasmic vesicle. The protein resides in the extracellular space. It is found in the extracellular matrix. Its subcellular location is the extracellular exosome. It localises to the mitochondrion. The protein localises to the mitochondrion intermembrane space. The protein resides in the mitochondrion inner membrane. It is found in the mitochondrion outer membrane. Its subcellular location is the rough endoplasmic reticulum. It localises to the cell projection. The protein localises to the cilium. The protein resides in the endoplasmic reticulum. In terms of biological role, secreted glycoprotein regulating the activation of different signaling pathways in adjacent cells to control different processes including cell adhesion, cell-matrix adhesion, cytoskeleton organization and cell migration. Promotes substrate adhesion, spreading and formation of focal contacts. Negatively regulates cell-matrix adhesion and stress fiber assembly through Rho protein signal transduction. Modulates the organization of actin cytoskeleton by stimulating the formation of stress fibers through interactions with components of Wnt signaling pathways. Promotes cell migration through activation of PTK2 and the downstream phosphatidylinositol 3-kinase signaling. Plays a role in bone formation and promotes osteoblast differentiation in a dose-dependent manner through mitogen-activated protein kinase signaling. Mediates myelination in the peripheral nervous system through ERBB2/ERBB3 signaling. Plays a role as a regulator of muscle hypertrophy through the components of dystrophin-associated protein complex. Involved in positive regulation of mitochondrial depolarization. Plays a role in neurite outgrowth. May participate in the obstruction of fluid outflow in the trabecular meshwork. The protein is Myocilin (MYOC) of Bos taurus (Bovine).